Consider the following 290-residue polypeptide: Probable 2-(5''-triphosphoribosyl)-3'-dephosphocoenzyme-A synthase (290 aa).

The protein belongs to the CitG/MdcB family.

The enzyme catalyses 3'-dephospho-CoA + ATP = 2'-(5''-triphospho-alpha-D-ribosyl)-3'-dephospho-CoA + adenine. Involved in the formation of 2-(5''-phosphoribosyl)-3'-dephosphocoenzyme-A, the prosthetic group of the acyl-carrier protein of the malonate decarboxylase. In Pseudomonas fluorescens (strain Pf0-1), this protein is Probable 2-(5''-triphosphoribosyl)-3'-dephosphocoenzyme-A synthase.